A 341-amino-acid polypeptide reads, in one-letter code: Trimethylamine N-oxide transport system ATP-binding protein TmoW (341 aa).

The region spanning 6–265 is the ABC transporter domain; it reads IKCESVYKIF…PATEYVRKFT (260 aa). 61 to 68 provides a ligand contact to ATP; it reads GLSGSGKS.

This sequence belongs to the ABC transporter superfamily. The complex is probably composed of two ATP-binding proteins (TmoW), two transmembrane proteins (TmoV) and a solute-binding protein (TmoX).

Its subcellular location is the cell inner membrane. The enzyme catalyses a quaternary ammonium(out) + ATP + H2O = a quaternary ammonium(in) + ADP + phosphate + H(+). Part of the ABC transporter complex TmoXWV involved in trimethylamine N-oxide (TMAO) import. Responsible for energy coupling to the transport system. In Pelagibacter ubique (strain HTCC1062), this protein is Trimethylamine N-oxide transport system ATP-binding protein TmoW.